The primary structure comprises 334 residues: MTFAVSVGGRRVDCEPGQTLLEAFLRGGVWMPNSCNQGTCGTCKLQVLSGEVDHGGAPEDTLSAEERASGLALACQARPLADTEVRSTADAGRVTHPLRDLTATVLEVADIARDTRRVLLGLAEPLAFEAGQYVELVVPGSGARRQYSLANTADEDKVLELHVRRVPGGVATDGWLFDGLAAGDRVEATGPLGDFHLPPPDEDDGGPMVLIGGGTGLAPLVGIARTALARHPSREVLLYHGVRGAADLYDLGRFAEIAEEHPGFRFVPVLSDEPDPAYRGGFPTDAFVEDVPSGRGWSGWLCGPPAMVEAGVKAFKRRRMSPRRIHREKFTPAS.

Positions Met1 to Ala91 constitute a 2Fe-2S ferredoxin-type domain. Cys35, Cys40, Cys43, and Cys75 together coordinate [2Fe-2S] cluster. In terms of domain architecture, FAD-binding FR-type spans Leu98–Pro198. FAD contacts are provided by residues Arg145–Ser148, His162–Arg164, Val170–Thr172, Thr215, Phe330, and Ser334.

In terms of assembly, monomer. Forms a heterodimer with GcoA. FAD is required as a cofactor. It depends on [2Fe-2S] cluster as a cofactor.

It catalyses the reaction 2 oxidized [cytochrome P450] + NADH = 2 reduced [cytochrome P450] + NAD(+) + H(+). It functions in the pathway aromatic compound metabolism. Its function is as follows. Part of a two-component P450 system that efficiently O-demethylates diverse aromatic substrates such as guaiacol and a wide variety of lignin-derived monomers. Is likely involved in lignin degradation, allowing Amycolatopsis sp. ATCC 39116 to catabolize plant biomass. GcoB transfers electrons from NADH to the cytochrome P450 subunit GcoA. Highly prefers NADH over NADPH as the electron donor. The chain is Aromatic O-demethylase, reductase subunit from Amycolatopsis sp. (strain ATCC 39116 / 75iv2).